The primary structure comprises 415 residues: Putative serpin-Z6C (415 aa).

Positions 357-381 (GTEAAAATAVCLTFASAAPSSRRPA) are RCL.

It belongs to the serpin family.

Its function is as follows. Probable serine protease inhibitor. The protein is Putative serpin-Z6C of Oryza sativa subsp. japonica (Rice).